A 299-amino-acid polypeptide reads, in one-letter code: Coenzyme PQQ synthesis protein B (299 aa).

The protein belongs to the PqqB family.

Its pathway is cofactor biosynthesis; pyrroloquinoline quinone biosynthesis. Functionally, may be involved in the transport of PQQ or its precursor to the periplasm. This is Coenzyme PQQ synthesis protein B from Xanthomonas euvesicatoria pv. vesicatoria (strain 85-10) (Xanthomonas campestris pv. vesicatoria).